We begin with the raw amino-acid sequence, 261 residues long: ATP synthase subunit a (261 aa).

6 consecutive transmembrane segments (helical) span residues 45 to 65 (ITNV…ILVL), 107 to 127 (VMTL…PLSF), 133 to 153 (MAVT…LGFM), 162 to 182 (MFWV…IEVI), 209 to 229 (IAGF…VTAI), and 232 to 252 (LELL…CVYL).

Belongs to the ATPase A chain family. In terms of assembly, F-type ATPases have 2 components, CF(1) - the catalytic core - and CF(0) - the membrane proton channel. CF(1) has five subunits: alpha(3), beta(3), gamma(1), delta(1), epsilon(1). CF(0) has four main subunits: a, b, b' and c.

Its subcellular location is the cell inner membrane. Functionally, key component of the proton channel; it plays a direct role in the translocation of protons across the membrane. This Cereibacter sphaeroides (strain ATCC 17025 / ATH 2.4.3) (Rhodobacter sphaeroides) protein is ATP synthase subunit a.